The sequence spans 350 residues: Biotin synthase (350 aa).

Positions 41–268 (NEVQISRLLS…KSRVRLSAGR (228 aa)) constitute a Radical SAM core domain. The [4Fe-4S] cluster site is built by cysteine 56, cysteine 60, and cysteine 63. Residues cysteine 100, cysteine 131, cysteine 191, and arginine 263 each coordinate [2Fe-2S] cluster.

This sequence belongs to the radical SAM superfamily. Biotin synthase family. Homodimer. It depends on [4Fe-4S] cluster as a cofactor. The cofactor is [2Fe-2S] cluster.

It carries out the reaction (4R,5S)-dethiobiotin + (sulfur carrier)-SH + 2 reduced [2Fe-2S]-[ferredoxin] + 2 S-adenosyl-L-methionine = (sulfur carrier)-H + biotin + 2 5'-deoxyadenosine + 2 L-methionine + 2 oxidized [2Fe-2S]-[ferredoxin]. It participates in cofactor biosynthesis; biotin biosynthesis; biotin from 7,8-diaminononanoate: step 2/2. In terms of biological role, catalyzes the conversion of dethiobiotin (DTB) to biotin by the insertion of a sulfur atom into dethiobiotin via a radical-based mechanism. This is Biotin synthase from Shewanella halifaxensis (strain HAW-EB4).